The sequence spans 494 residues: Alpha-amylase-related protein (494 aa).

The N-terminal stretch at 1–20 (MIKFALALTLCLAGASLSLA) is a signal peptide. Glutamine 21 is subject to Pyrrolidone carboxylic acid. Residues cysteine 48 and cysteine 104 are joined by a disulfide bond. Asparagine 118, glutamine 169, and aspartate 178 together coordinate Ca(2+). An intrachain disulfide couples cysteine 157 to cysteine 171. Arginine 206 contacts chloride. Aspartate 208 functions as the Nucleophile in the catalytic mechanism. Histidine 212 contacts Ca(2+). Glutamate 245 serves as the catalytic Proton donor. Chloride-binding residues include asparagine 308 and arginine 343. Intrachain disulfides connect cysteine 376–cysteine 382, cysteine 418–cysteine 441, and cysteine 448–cysteine 460.

It belongs to the glycosyl hydrolase 13 family. As to quaternary structure, monomer. Ca(2+) is required as a cofactor. Requires chloride as cofactor.

It is found in the secreted. It catalyses the reaction Endohydrolysis of (1-&gt;4)-alpha-D-glucosidic linkages in polysaccharides containing three or more (1-&gt;4)-alpha-linked D-glucose units.. In Drosophila auraria (Fruit fly), this protein is Alpha-amylase-related protein (Amyrel).